Here is a 340-residue protein sequence, read N- to C-terminus: UDP-3-O-(3-hydroxymyristoyl)glucosamine N-acyltransferase (340 aa).

The Proton acceptor role is filled by His-239.

The protein belongs to the transferase hexapeptide repeat family. LpxD subfamily. In terms of assembly, homotrimer.

It carries out the reaction a UDP-3-O-[(3R)-3-hydroxyacyl]-alpha-D-glucosamine + a (3R)-hydroxyacyl-[ACP] = a UDP-2-N,3-O-bis[(3R)-3-hydroxyacyl]-alpha-D-glucosamine + holo-[ACP] + H(+). The enzyme catalyses UDP-3-O-[(3R)-3-hydroxytetradecanoyl]-alpha-D-glucosamine + (3R)-hydroxytetradecanoyl-[ACP] = UDP-2-N,3-O-bis[(3R)-3-hydroxytetradecanoyl]-alpha-D-glucosamine + holo-[ACP] + H(+). Its pathway is glycolipid biosynthesis; lipid IV(A) biosynthesis; lipid IV(A) from (3R)-3-hydroxytetradecanoyl-[acyl-carrier-protein] and UDP-N-acetyl-alpha-D-glucosamine: step 3/6. Its function is as follows. Catalyzes the N-acylation of UDP-3-O-(hydroxytetradecanoyl)glucosamine using 3-hydroxytetradecanoyl-ACP as the acyl donor. Is involved in the biosynthesis of lipid A, a phosphorylated glycolipid that anchors the lipopolysaccharide to the outer membrane of the cell. In Yersinia enterocolitica, this protein is UDP-3-O-(3-hydroxymyristoyl)glucosamine N-acyltransferase.